The primary structure comprises 469 residues: 3-isopropylmalate dehydratase large subunit (469 aa).

Residues C346, C406, and C409 each coordinate [4Fe-4S] cluster.

Belongs to the aconitase/IPM isomerase family. LeuC type 1 subfamily. In terms of assembly, heterodimer of LeuC and LeuD. Requires [4Fe-4S] cluster as cofactor.

The catalysed reaction is (2R,3S)-3-isopropylmalate = (2S)-2-isopropylmalate. It functions in the pathway amino-acid biosynthesis; L-leucine biosynthesis; L-leucine from 3-methyl-2-oxobutanoate: step 2/4. In terms of biological role, catalyzes the isomerization between 2-isopropylmalate and 3-isopropylmalate, via the formation of 2-isopropylmaleate. The polypeptide is 3-isopropylmalate dehydratase large subunit (Lysinibacillus sphaericus (strain C3-41)).